Consider the following 197-residue polypeptide: NADH-quinone oxidoreductase subunit C (197 aa).

Belongs to the complex I 30 kDa subunit family. As to quaternary structure, NDH-1 is composed of 14 different subunits. Subunits NuoB, C, D, E, F, and G constitute the peripheral sector of the complex.

The protein localises to the cell inner membrane. The enzyme catalyses a quinone + NADH + 5 H(+)(in) = a quinol + NAD(+) + 4 H(+)(out). Its function is as follows. NDH-1 shuttles electrons from NADH, via FMN and iron-sulfur (Fe-S) centers, to quinones in the respiratory chain. The immediate electron acceptor for the enzyme in this species is believed to be ubiquinone. Couples the redox reaction to proton translocation (for every two electrons transferred, four hydrogen ions are translocated across the cytoplasmic membrane), and thus conserves the redox energy in a proton gradient. In Neisseria gonorrhoeae (strain ATCC 700825 / FA 1090), this protein is NADH-quinone oxidoreductase subunit C.